The primary structure comprises 101 residues: uncharacterized protein (101 aa).

This is an uncharacterized protein from Saccharolobus islandicus (Sulfolobus islandicus).